A 510-amino-acid chain; its full sequence is Thermostable carboxypeptidase 1 (510 aa).

Residues 3–506 form the Peptidase M32 domain; the sequence is PEAAYQNLLE…FLAYLEKKYA (504 aa). The HPF motif lies at 245 to 247; the sequence is HPF. The DXRXT motif lies at 255-259; that stretch reads DVRIT. Position 276 (His-276) interacts with Zn(2+). An HEXXH motif is present at residues 276-280; it reads HEMGH. The active-site Proton donor/acceptor is the Glu-277. Zn(2+)-binding residues include His-280 and Glu-306. An HES/GQ motif is present at residues 305-308; it reads HESQ. The short motif at 357 to 362 is the I/NRXXA/SD element; that stretch reads IRVEAD. A GXXQDXHW motif is present at residues 412–419; sequence GVMQDVHW.

This sequence belongs to the peptidase M32 family. Homodimer. Requires Zn(2+) as cofactor.

The catalysed reaction is Release of a C-terminal amino acid with broad specificity, except for -Pro.. In terms of biological role, broad specificity carboxypetidase that releases amino acids sequentially from the C-terminus, including neutral, aromatic, polar and basic residues, but not Pro. Has lower activity with substrates ending with Gly or Glu. The protein is Thermostable carboxypeptidase 1 of Thermus thermophilus (strain ATCC 27634 / DSM 579 / HB8).